The following is a 327-amino-acid chain: UPF0665 family protein C23C4.06c (327 aa).

Belongs to the UPF0665 family.

It localises to the cytoplasm. It is found in the nucleus. This is UPF0665 family protein C23C4.06c from Schizosaccharomyces pombe (strain 972 / ATCC 24843) (Fission yeast).